A 313-amino-acid chain; its full sequence is Putative olfactory receptor 2B3 (313 aa).

The Extracellular portion of the chain corresponds to 1–25; it reads MNWENESSPKEFILLGFSDRAWLQM. N-linked (GlcNAc...) asparagine glycosylation is present at Asn5. A helical membrane pass occupies residues 26–49; the sequence is PLFVVLLISYTITIFGNVSIMMVC. At 50–57 the chain is on the cytoplasmic side; the sequence is ILDPKLHT. A helical membrane pass occupies residues 58 to 79; that stretch reads PMYFFLTNLSILDLCYTTTTVP. The Extracellular segment spans residues 80 to 100; sequence HMLVNIGCNKKTISYAGCVAH. A disulfide bridge links Cys97 with Cys189. The chain crosses the membrane as a helical span at residues 101–120; that stretch reads LIIFLALGATECLLLAVMSF. At 121–139 the chain is on the cytoplasmic side; the sequence is DRYVAVCRPLHYVVIMNYW. A helical membrane pass occupies residues 140–158; it reads FCLRMAAFSWLIGFGNSVL. The Extracellular segment spans residues 159–195; that stretch reads QSSLTLNMPRCGHQEVDHFFCEVPALLKLSCADTKPI. A helical membrane pass occupies residues 196-219; that stretch reads EAELFFFSVLILLIPVTLILISYG. Residues 220–236 are Cytoplasmic-facing; the sequence is FIAQAVLKIRSAEGRQK. A helical transmembrane segment spans residues 237 to 259; it reads AFGTCGSHMIVVSLFYGTAIYMY. Over 260–272 the chain is Extracellular; it reads LQPPSSTSKDWGK. Residues 273 to 292 traverse the membrane as a helical segment; the sequence is MVSLFYGIITSMLNSLIYSL. Over 293–313 the chain is Cytoplasmic; that stretch reads RNKDMKEAFKRLMPRIFFCKK.

Belongs to the G-protein coupled receptor 1 family.

It localises to the cell membrane. In terms of biological role, odorant receptor. This Homo sapiens (Human) protein is Putative olfactory receptor 2B3 (OR2B3).